Reading from the N-terminus, the 341-residue chain is MTGLTVALDAMGGDFGPQVIVPAAVQALLQYPELKIKLYGDHSAITAQLSLLNQHSYSRISIIHSDLVIADETRPSHALRRSQGTSMRMALDAVSDGEADACVSAGNTGALMALSRYTLKQLPGVDRPALVSAIPTHGLNKTWLLDLGANVSCDADTLFQFAVMGSVLAEQSLTSKPRVALLNIGEEEIKGNDLVKRCAEMLSNSPDIHYIGYIEGDQLYAGKADVIVCDGFVGNVSLKTSEGVANLFINSFKQTISTNPMKRLLAKWLFRDLFVSLKKLNPDQYNGASLLGLRGIVVKSHGRADTAAFANAIGEAVHEVKRQIPTKISDRLEEVLLERHY.

The protein belongs to the PlsX family. In terms of assembly, homodimer. Probably interacts with PlsY.

It localises to the cytoplasm. The enzyme catalyses a fatty acyl-[ACP] + phosphate = an acyl phosphate + holo-[ACP]. Its pathway is lipid metabolism; phospholipid metabolism. Catalyzes the reversible formation of acyl-phosphate (acyl-PO(4)) from acyl-[acyl-carrier-protein] (acyl-ACP). This enzyme utilizes acyl-ACP as fatty acyl donor, but not acyl-CoA. The sequence is that of Phosphate acyltransferase from Photobacterium profundum (strain SS9).